The sequence spans 311 residues: CD-NTase-associated protein 6 (311 aa).

ATP-binding positions include 84-89 (GSGKTE) and 215-216 (RR).

This sequence belongs to the AAA ATPase family. Homohexamer. Forms a 1:1:6 CdnC:Cap7:Cap6 complex.

Its function is as follows. Regulates complex assembly in a CBASS antivirus system. CBASS (cyclic oligonucleotide-based antiphage signaling system) provides immunity against bacteriophage. The CD-NTase protein synthesizes cyclic nucleotides in response to infection; these serve as specific second messenger signals. The signals activate a diverse range of effectors, leading to bacterial cell death and thus abortive phage infection. A type III-C(AAA) CBASS system. Functionally, binds and disassembles an active CdnC:Cap7 (Cap7 is also called HORMA) complex, inhibiting the complex's ability to synthesize cyclic nucleotide second messengers. An AAA+-ATPase remodeler, in the absence of foreign threat Cap6 (also called Trip13) probably maintains the Cap7 protein in its open, inactive state. Once activated (presumably by a bacteriophage protein) Cap7 binds to and activates its cognate CD-NTase (CdnC in this bacteria) to synthesize cAAA, a cyclic nucleotide second messenger. cAAA activates the NucC endonuclease which degrades all DNA in the infected cell, causing cell death and abortive phage infection. In terms of biological role, protects E.coli strain JP313 against bacteriophage lambda cI- infection. When the cdnC-cap7-cap6-nucC operon is transformed into a susceptible E.coli strain it confers bacteriophage lambda cI- immunity. Mutations in the sensor (Cap7 also called HORMA) or effector proteins (CdnC, NucC) but not the disassembly protein (Cap6 also called Trip13) no longer confer immunity. The presence of the intact operon leads to culture collapse and cell death, which occurs before the phage has finished its replication cycle, thus protecting non-infected bacteria by aborting the phage infection and preventing its propagation. In Escherichia coli (strain MS 115-1), this protein is CD-NTase-associated protein 6.